We begin with the raw amino-acid sequence, 409 residues long: Histidinol dehydrogenase homolog (409 aa).

It belongs to the histidinol dehydrogenase family.

The polypeptide is Histidinol dehydrogenase homolog (Synechocystis sp. (strain ATCC 27184 / PCC 6803 / Kazusa)).